The following is a 150-amino-acid chain: UPF0756 membrane protein ECA1265 (150 aa).

4 helical membrane-spanning segments follow: residues 1–21, 51–71, 82–102, and 127–147; these read MAYIDPTLLILLVLAGLGIIS, YGLSIGIVVLTIGVMAPIASG, FLHWKSLLAILIGVAVSWLGG, and ALFRGVPVGPLIAAGLLSLLI.

It belongs to the UPF0756 family.

It is found in the cell membrane. This chain is UPF0756 membrane protein ECA1265, found in Pectobacterium atrosepticum (strain SCRI 1043 / ATCC BAA-672) (Erwinia carotovora subsp. atroseptica).